The following is a 153-amino-acid chain: Small ribosomal subunit protein uS15 (153 aa).

The protein belongs to the universal ribosomal protein uS15 family. In terms of assembly, part of the 30S ribosomal subunit.

The polypeptide is Small ribosomal subunit protein uS15 (Sulfolobus acidocaldarius (strain ATCC 33909 / DSM 639 / JCM 8929 / NBRC 15157 / NCIMB 11770)).